The primary structure comprises 1424 residues: DNA-directed RNA polymerase subunit beta' (1424 aa).

Positions 60, 62, 75, and 78 each coordinate Zn(2+). Mg(2+)-binding residues include aspartate 449, aspartate 451, and aspartate 453. Zn(2+) contacts are provided by cysteine 783, cysteine 857, cysteine 864, and cysteine 867.

It belongs to the RNA polymerase beta' chain family. In terms of assembly, the RNAP catalytic core consists of 2 alpha, 1 beta, 1 beta' and 1 omega subunit. When a sigma factor is associated with the core the holoenzyme is formed, which can initiate transcription. The cofactor is Mg(2+). Zn(2+) serves as cofactor.

The enzyme catalyses RNA(n) + a ribonucleoside 5'-triphosphate = RNA(n+1) + diphosphate. Its function is as follows. DNA-dependent RNA polymerase catalyzes the transcription of DNA into RNA using the four ribonucleoside triphosphates as substrates. The sequence is that of DNA-directed RNA polymerase subunit beta' from Treponema denticola (strain ATCC 35405 / DSM 14222 / CIP 103919 / JCM 8153 / KCTC 15104).